Consider the following 185-residue polypeptide: ATP synthase subunit delta, chloroplastic (185 aa).

It belongs to the ATPase delta chain family. F-type ATPases have 2 components, F(1) - the catalytic core - and F(0) - the membrane proton channel. F(1) has five subunits: alpha(3), beta(3), gamma(1), delta(1), epsilon(1). CF(0) has four main subunits: a(1), b(1), b'(1) and c(10-14). The alpha and beta chains form an alternating ring which encloses part of the gamma chain. F(1) is attached to F(0) by a central stalk formed by the gamma and epsilon chains, while a peripheral stalk is formed by the delta, b and b' chains.

The protein resides in the plastid. It is found in the chloroplast thylakoid membrane. Functionally, f(1)F(0) ATP synthase produces ATP from ADP in the presence of a proton or sodium gradient. F-type ATPases consist of two structural domains, F(1) containing the extramembraneous catalytic core and F(0) containing the membrane proton channel, linked together by a central stalk and a peripheral stalk. During catalysis, ATP synthesis in the catalytic domain of F(1) is coupled via a rotary mechanism of the central stalk subunits to proton translocation. Its function is as follows. This protein is part of the stalk that links CF(0) to CF(1). It either transmits conformational changes from CF(0) to CF(1) or is implicated in proton conduction. The sequence is that of ATP synthase subunit delta, chloroplastic from Guillardia theta (Cryptophyte).